Consider the following 903-residue polypeptide: Cell division cycle protein 48 homolog MJ1156 (903 aa).

ATP is bound by residues G220 to T227 and G493 to T500.

It belongs to the AAA ATPase family. CDC48 subfamily.

This is Cell division cycle protein 48 homolog MJ1156 from Methanocaldococcus jannaschii (strain ATCC 43067 / DSM 2661 / JAL-1 / JCM 10045 / NBRC 100440) (Methanococcus jannaschii).